The sequence spans 153 residues: UPF0260 protein YcgN (153 aa).

It belongs to the UPF0260 family.

The chain is UPF0260 protein YcgN from Escherichia coli O6:K15:H31 (strain 536 / UPEC).